The following is a 272-amino-acid chain: Ribosomal RNA small subunit methyltransferase J (272 aa).

Residues 120–121 (RD), 136–137 (ER), 171–172 (SS), and aspartate 188 each bind S-adenosyl-L-methionine.

This sequence belongs to the methyltransferase superfamily. RsmJ family.

The protein resides in the cytoplasm. It catalyses the reaction guanosine(1516) in 16S rRNA + S-adenosyl-L-methionine = N(2)-methylguanosine(1516) in 16S rRNA + S-adenosyl-L-homocysteine + H(+). In terms of biological role, specifically methylates the guanosine in position 1516 of 16S rRNA. In Colwellia psychrerythraea (strain 34H / ATCC BAA-681) (Vibrio psychroerythus), this protein is Ribosomal RNA small subunit methyltransferase J.